Here is a 362-residue protein sequence, read N- to C-terminus: NAD(P)H-quinone oxidoreductase subunit 1, chloroplastic (362 aa).

8 consecutive transmembrane segments (helical) span residues 29–49, 103–123, 128–148, 164–184, 202–222, 247–267, 303–323, and 335–355; these read ILPI…IVWL, IAVI…HFVL, IGVF…LMAG, AAQS…ISLL, FFGW…ISSL, YSGI…LVSS, TMGI…SITI, and LLNL…LLTT.

It belongs to the complex I subunit 1 family. As to quaternary structure, NDH is composed of at least 16 different subunits, 5 of which are encoded in the nucleus.

It is found in the plastid. It localises to the chloroplast thylakoid membrane. The catalysed reaction is a plastoquinone + NADH + (n+1) H(+)(in) = a plastoquinol + NAD(+) + n H(+)(out). The enzyme catalyses a plastoquinone + NADPH + (n+1) H(+)(in) = a plastoquinol + NADP(+) + n H(+)(out). NDH shuttles electrons from NAD(P)H:plastoquinone, via FMN and iron-sulfur (Fe-S) centers, to quinones in the photosynthetic chain and possibly in a chloroplast respiratory chain. The immediate electron acceptor for the enzyme in this species is believed to be plastoquinone. Couples the redox reaction to proton translocation, and thus conserves the redox energy in a proton gradient. In Triticum aestivum (Wheat), this protein is NAD(P)H-quinone oxidoreductase subunit 1, chloroplastic.